We begin with the raw amino-acid sequence, 141 residues long: Large ribosomal subunit protein uL11 (141 aa).

The protein belongs to the universal ribosomal protein uL11 family. As to quaternary structure, part of the ribosomal stalk of the 50S ribosomal subunit. Interacts with L10 and the large rRNA to form the base of the stalk. L10 forms an elongated spine to which L12 dimers bind in a sequential fashion forming a multimeric L10(L12)X complex. One or more lysine residues are methylated.

Functionally, forms part of the ribosomal stalk which helps the ribosome interact with GTP-bound translation factors. The sequence is that of Large ribosomal subunit protein uL11 from Thermosipho africanus (strain TCF52B).